A 513-amino-acid polypeptide reads, in one-letter code: MRKKCSVCLWILVLLLSCLSGKSAYAATSTTIAKHIGNSNPLIDHHLGADPVALTYNGRVYIYMSSDDYEYNSNGTIKDNSFANLNRVFVISSADMVNWTDHGAIPVAGANGANGGRGIAKWAGASWAPSIAVKKINGKDKFFLYFANSGGGIGVLTADSPIGPWTDPIGKPLVTPSTPGMSGVVWLFDPAVFVDDDGTGYLYAGGGVPGVSNPTQGQWANPKTARVIKLGPDMTSVVGSASTIDAPFMFEDSGLHKYNGTYYYSYCINFGGTHPADKPPGEIGYMTSSSPMGPFTYRGHFLKNPGAFFGGGGNNHHAVFNFKNEWYVVYHAQTVSSALFGAGKGYRSPHINKLVHNADGSIQEVAANYAGVTQISNLNPYNRVEAETFAWNGRILTEKSTAPGGPVNNQHVTSIQNGDWIAVGNADFGAGGARSFKANVASTLGGKIEVRLDSADGKLVGTLNVPSTGGAQTWREIETAVSGATGVHKVFFVFTGTGTGNLFNFDYWQFTQR.

An N-terminal signal peptide occupies residues 1–26; the sequence is MRKKCSVCLWILVLLLSCLSGKSAYA. The Proton acceptor role is filled by Asp-50. Catalysis depends on Glu-251, which acts as the Proton donor. Residue Asn-314 participates in substrate binding. The region spanning 382-511 is the CBM6 domain; that stretch reads NRVEAETFAW…LFNFDYWQFT (130 aa). Glu-385, Glu-387, Asn-409, Gln-410, and Asp-506 together coordinate Ca(2+).

The protein localises to the secreted. It carries out the reaction Hydrolysis of terminal non-reducing alpha-L-arabinofuranoside residues in alpha-L-arabinosides.. The protein operates within glycan degradation; xylan degradation. Functionally, cleaves arabinose units from O-2- or O-3-monosubstituted xylose residues, thereby assisting in arabinoxylan (AX) and short-chain arabinoxylo-oligosaccharide (AXOS) degradation. Is more active on wheat bran AXOS than on wheat water-extractable AX and rye water-extractable AX. Does not display endoxylanase, xylosidase or arabinanase activity. The chain is Arabinoxylan arabinofuranohydrolase (xynD) from Bacillus subtilis (strain 168).